Here is a 160-residue protein sequence, read N- to C-terminus: MDQAKLARMQASVRIGGKGTPRRKVKKVHKSSGTDDKKLQTALKKLNVQPIQAIEEVNMFKSDGNVIHFSAPKVHASVPSNTFAIYGNGEDKELTELVPGILNQLGPDSLASLRKLAESYQSMQKEKGEDGDKKDDDDEDDDDIPELVAGDNFESKTEVE.

2 disordered regions span residues glycine 16 to aspartate 36 and glutamate 118 to glutamate 160. Residues threonine 20 to lysine 30 show a composition bias toward basic residues. Residues glycine 33–valine 98 enclose the NAC-A/B domain. Basic and acidic residues predominate over residues glutamine 124–lysine 134. A compositionally biased stretch (acidic residues) spans aspartate 135–proline 145.

It belongs to the NAC-beta family. As to quaternary structure, part of the nascent polypeptide-associated complex (NAC), consisting of EGD2 and EGD1. NAC associates with ribosomes via EGD1.

Its subcellular location is the cytoplasm. It localises to the nucleus. Its function is as follows. Component of the nascent polypeptide-associated complex (NAC), a dynamic component of the ribosomal exit tunnel, protecting the emerging polypeptides from interaction with other cytoplasmic proteins to ensure appropriate nascent protein targeting. The NAC complex also promotes mitochondrial protein import by enhancing productive ribosome interactions with the outer mitochondrial membrane and blocks the inappropriate interaction of ribosomes translating non-secretory nascent polypeptides with translocation sites in the membrane of the endoplasmic reticulum. EGD1 may act as a transcription factor that exert a negative effect on the expression of several genes that are transcribed by RNA polymerase II. This Phaeosphaeria nodorum (strain SN15 / ATCC MYA-4574 / FGSC 10173) (Glume blotch fungus) protein is Nascent polypeptide-associated complex subunit beta (EGD1).